Reading from the N-terminus, the 210-residue chain is Probable membrane protein Rv1733c (210 aa).

2 helical membrane-spanning segments follow: residues Ala-43 to Ala-63 and Ala-165 to Leu-185.

Its subcellular location is the cell membrane. This chain is Probable membrane protein Rv1733c, found in Mycobacterium tuberculosis (strain ATCC 25618 / H37Rv).